A 448-amino-acid polypeptide reads, in one-letter code: 3-phosphoshikimate 1-carboxyvinyltransferase (448 aa).

Residues K38, S39, and R43 each contribute to the 3-phosphoshikimate site. K38 serves as a coordination point for phosphoenolpyruvate. Phosphoenolpyruvate-binding residues include G111 and R140. S185, Q187, D335, and K362 together coordinate 3-phosphoshikimate. Residue Q187 participates in phosphoenolpyruvate binding. Catalysis depends on D335, which acts as the Proton acceptor. Residues R366 and R408 each contribute to the phosphoenolpyruvate site.

It belongs to the EPSP synthase family. As to quaternary structure, monomer.

It localises to the cytoplasm. It catalyses the reaction 3-phosphoshikimate + phosphoenolpyruvate = 5-O-(1-carboxyvinyl)-3-phosphoshikimate + phosphate. It participates in metabolic intermediate biosynthesis; chorismate biosynthesis; chorismate from D-erythrose 4-phosphate and phosphoenolpyruvate: step 6/7. In terms of biological role, catalyzes the transfer of the enolpyruvyl moiety of phosphoenolpyruvate (PEP) to the 5-hydroxyl of shikimate-3-phosphate (S3P) to produce enolpyruvyl shikimate-3-phosphate and inorganic phosphate. The chain is 3-phosphoshikimate 1-carboxyvinyltransferase from Gloeothece citriformis (strain PCC 7424) (Cyanothece sp. (strain PCC 7424)).